Reading from the N-terminus, the 732-residue chain is Ferric aerobactin receptor (732 aa).

Residues 1 to 25 (MMISKKYTLWALNPLLLTMMAPAVA) form the signal peptide. Positions 31–38 (ETFVVSAN) match the TonB box motif. The TBDR plug domain occupies 43–153 (TVAEMAQTTW…TGGLINIVTK (111 aa)). The region spanning 158–732 (ETMMEFEAGT…TFGLNYSVLF (575 aa)) is the TBDR beta-barrel domain. The TonB C-terminal box signature appears at 715–732 (YDYKGRGRTFGLNYSVLF).

It belongs to the TonB-dependent receptor family.

The protein localises to the cell outer membrane. Its function is as follows. Receptor for cloacin DF13/aerobactin. The protein is Ferric aerobactin receptor (iutA) of Escherichia coli.